Here is a 114-residue protein sequence, read N- to C-terminus: Cell division protein FtsB (114 aa).

Residues Met1–Lys3 are Cytoplasmic-facing. The helical transmembrane segment at Leu4 to Val21 threads the bilayer. Residues Gly22–His114 lie on the Periplasmic side of the membrane. The stretch at Arg31–Gly62 forms a coiled coil.

The protein belongs to the FtsB family. In terms of assembly, part of a complex composed of FtsB, FtsL and FtsQ.

It localises to the cell inner membrane. Functionally, essential cell division protein. May link together the upstream cell division proteins, which are predominantly cytoplasmic, with the downstream cell division proteins, which are predominantly periplasmic. The protein is Cell division protein FtsB of Edwardsiella ictaluri (strain 93-146).